Here is a 408-residue protein sequence, read N- to C-terminus: Serine/threonine transporter SstT (408 aa).

A run of 10 helical transmembrane segments spans residues 15–35, 49–69, 85–105, 142–162, 192–212, 218–238, 246–268, 289–309, 317–337, and 362–382; these read MGLI…AVIW, FISA…TAAI, LLYV…SFVF, ALME…GLML, PLGI…GALL, LAVI…LIVF, YPLV…SSAA, ISIP…ISVI, LGIP…SIAA, and TEVA…QDST.

Belongs to the dicarboxylate/amino acid:cation symporter (DAACS) (TC 2.A.23) family.

The protein resides in the cell inner membrane. It carries out the reaction L-serine(in) + Na(+)(in) = L-serine(out) + Na(+)(out). The enzyme catalyses L-threonine(in) + Na(+)(in) = L-threonine(out) + Na(+)(out). Involved in the import of serine and threonine into the cell, with the concomitant import of sodium (symport system). The sequence is that of Serine/threonine transporter SstT from Marinobacter nauticus (strain ATCC 700491 / DSM 11845 / VT8) (Marinobacter aquaeolei).